Reading from the N-terminus, the 1595-residue chain is A disintegrin and metalloproteinase with thrombospondin motifs 7 (1595 aa).

The first 20 residues, 1–20 (MHRGLNLLLILCALAPHVLG), serve as a signal peptide directing secretion. A propeptide spanning residues 21–217 (PASGLPTEGR…QRQQKRRQQR (197 aa)) is cleaved from the precursor. 2 N-linked (GlcNAc...) asparagine glycosylation sites follow: N84 and N105. The disordered stretch occupies residues 165–218 (PGHAQPHMVYKHKRSGQQDDSRTSGTCGVQGSPELKHQREHWEQRQQKRRQQRS). The Cysteine switch motif lies at 189–196 (GTCGVQGS). C191 contacts Zn(2+). Residues 198–210 (ELKHQREHWEQRQ) show a composition bias toward basic and acidic residues. The region spanning 223-434 (KWVETLVVAD…GWGLCLDDRP (212 aa)) is the Peptidase M12B domain. 11 cysteine pairs are disulfide-bonded: C299–C353, C328–C335, C347–C429, C386–C413, C456–C479, C467–C485, C474–C504, C498–C509, C532–C569, C536–C574, and C547–C559. Position 369 (H369) interacts with Zn(2+). Residue E370 is part of the active site. Zn(2+) contacts are provided by H373 and H379. Residues 444–519 (VLPGVLYDVN…VPEGFQPETV (76 aa)) form the Disintegrin domain. The 56-residue stretch at 520-575 (DGGWSGWSAWSVCSRSCGVGVRSSERQCTQPVPKNKGKYCVGERKRYRLCNLQACP) folds into the TSP type-1 1 domain. N619 carries N-linked (GlcNAc...) asparagine glycosylation. The segment at 680 to 791 (HTVSRTFKEA…PGVHYKYTIQ (112 aa)) is spacer. TSP type-1 domains are found at residues 801–860 (PEFS…EPCP), 861–917 (ARWW…IPCY), and 922–975 (CPSS…QPCQ). Disordered regions lie at residues 989–1035 (GSSS…LDPP), 1077–1121 (PPHI…SHSP), 1179–1234 (REDT…LSPD), and 1255–1315 (KPVH…APTD). 2 stretches are compositionally biased toward pro residues: residues 1005 to 1015 (QPVPRPSPASS) and 1079 to 1089 (HIRPTEPPSDS). A compositionally biased stretch (low complexity) spans 1220-1232 (SSPSNSTTQASLS). The span at 1268-1280 (QIQTPHTEGTQSP) shows a compositional bias: polar residues. TSP type-1 domains follow at residues 1320–1368 (KNAS…RHCH), 1371–1431 (PCAA…QPCL), 1433–1476 (WYTS…PCNT), and 1478–1538 (PCTQ…EDCE). A PLAC domain is found at 1541 to 1581 (EPSRCERDRLPFNFCETLRLLGRCQLPTIRAQCCRSCPPLS).

As to quaternary structure, interacts with COMP. Zn(2+) serves as cofactor. Post-translationally, glycosylated. Can be O-fucosylated by POFUT2 on a serine or a threonine residue found within the consensus sequence C1-X(2)-(S/T)-C2-G of the TSP type-1 repeat domains where C1 and C2 are the first and second cysteine residue of the repeat, respectively. Fucosylated repeats can then be further glycosylated by the addition of a beta-1,3-glucose residue by the glucosyltransferase, B3GALTL. Fucosylation mediates the efficient secretion of ADAMTS family members. Can also be C-glycosylated with one or two mannose molecules on tryptophan residues within the consensus sequence W-X-X-W of the TPRs. N- and C-glycosylations can also facilitate secretion. O-glycosylated proteoglycan; contains chondroitin sulfate. In terms of processing, may be cleaved by a furin endopeptidase. The precursor is sequentially processed. In terms of tissue distribution, detected in liver, ovary, kidney, testicle, lung and embryo.

The protein resides in the secreted. The protein localises to the extracellular space. Its subcellular location is the extracellular matrix. Metalloprotease. Was previously shown to degrade COMP. However, a later study found no activity against COMP. The sequence is that of A disintegrin and metalloproteinase with thrombospondin motifs 7 (Adamts7) from Rattus norvegicus (Rat).